A 93-amino-acid polypeptide reads, in one-letter code: Large ribosomal subunit protein bL27 (93 aa).

Positions 1–10 (MRFLLGLQYF) are excised as a propeptide. Residues 14-36 (KGVGSTKNGRDSESKRLGAKKSD) are disordered. A compositionally biased stretch (basic and acidic residues) spans 21 to 36 (NGRDSESKRLGAKKSD).

It belongs to the bacterial ribosomal protein bL27 family. The N-terminus is cleaved by ribosomal processing cysteine protease Prp.

This is Large ribosomal subunit protein bL27 from Mycoplasma capricolum subsp. capricolum (strain California kid / ATCC 27343 / NCTC 10154).